The following is a 278-amino-acid chain: Aliphatic sulfonates import ATP-binding protein SsuB (278 aa).

In terms of domain architecture, ABC transporter spans 15-236; sequence LVLRDLSKRF…SQGDAAFAAL (222 aa). Residue 47–54 participates in ATP binding; that stretch reads GRSGCGKS. The span at 251 to 264 shows a compositional bias: basic and acidic residues; it reads PERESFTHPNDGEP. A disordered region spans residues 251–278; sequence PERESFTHPNDGEPRWPGVPAHGVRWAV.

Belongs to the ABC transporter superfamily. Aliphatic sulfonates importer (TC 3.A.1.17.2) family. As to quaternary structure, the complex is composed of two ATP-binding proteins (SsuB), two transmembrane proteins (SsuC) and a solute-binding protein (SsuA).

It localises to the cell inner membrane. It carries out the reaction ATP + H2O + aliphatic sulfonate-[sulfonate-binding protein]Side 1 = ADP + phosphate + aliphatic sulfonateSide 2 + [sulfonate-binding protein]Side 1.. Its function is as follows. Part of the ABC transporter complex SsuABC involved in aliphatic sulfonates import. Responsible for energy coupling to the transport system. This is Aliphatic sulfonates import ATP-binding protein SsuB from Albidiferax ferrireducens (strain ATCC BAA-621 / DSM 15236 / T118) (Rhodoferax ferrireducens).